Consider the following 396-residue polypeptide: Probable sugar efflux transporter (396 aa).

12 helical membrane-spanning segments follow: residues 15-35 (VVTL…PVGL), 50-70 (VGIM…PFML), 81-101 (LICL…SWSF), 103-123 (VLVI…SITA), 136-156 (AQAL…GLPL), 170-190 (FFAI…LLPL), 209-229 (PALM…YTAY), 246-266 (FATA…VIFG), 275-295 (ALVS…LPAA), 299-319 (IHLG…GLGM), 333-353 (VAMA…ALVG), and 364-384 (MIGY…IIIF).

Belongs to the major facilitator superfamily. SotB (TC 2.A.1.2) family.

The protein resides in the cell inner membrane. In terms of biological role, involved in the efflux of sugars. The physiological role may be the reduction of the intracellular concentration of toxic sugars or sugar metabolites. The polypeptide is Probable sugar efflux transporter (Shigella boydii serotype 18 (strain CDC 3083-94 / BS512)).